The primary structure comprises 407 residues: Phosphopentomutase (407 aa).

Positions 10, 306, 311, 347, 348, and 359 each coordinate Mn(2+).

Belongs to the phosphopentomutase family. Mn(2+) serves as cofactor.

Its subcellular location is the cytoplasm. It carries out the reaction 2-deoxy-alpha-D-ribose 1-phosphate = 2-deoxy-D-ribose 5-phosphate. The catalysed reaction is alpha-D-ribose 1-phosphate = D-ribose 5-phosphate. Its pathway is carbohydrate degradation; 2-deoxy-D-ribose 1-phosphate degradation; D-glyceraldehyde 3-phosphate and acetaldehyde from 2-deoxy-alpha-D-ribose 1-phosphate: step 1/2. Isomerase that catalyzes the conversion of deoxy-ribose 1-phosphate (dRib-1-P) and ribose 1-phosphate (Rib-1-P) to deoxy-ribose 5-phosphate (dRib-5-P) and ribose 5-phosphate (Rib-5-P), respectively. This Enterobacter sp. (strain 638) protein is Phosphopentomutase.